Consider the following 284-residue polypeptide: Sulfotransferase 2A6 (284 aa).

Position 43–48 (43–48 (KSGTNW)) interacts with 3'-phosphoadenylyl sulfate. The active-site Proton acceptor is His98. 3'-phosphoadenylyl sulfate is bound by residues Arg120, Ser128, Tyr183, 217-222 (SSFQVM), and 246-248 (RNG).

The protein belongs to the sulfotransferase 1 family. In terms of assembly, oligomer. As to expression, liver, exhibiting a sex-dependent spatial localization in the lobule of the liver.

It is found in the cytoplasm. Its subcellular location is the cytosol. It catalyses the reaction an alcohol + 3'-phosphoadenylyl sulfate = an alkyl sulfate + adenosine 3',5'-bisphosphate + H(+). The catalysed reaction is glycolithocholate + 3'-phosphoadenylyl sulfate = sulfoglycolithocholate + adenosine 3',5'-bisphosphate + H(+). The enzyme catalyses taurolithocholate + 3'-phosphoadenylyl sulfate = taurolithocholate 3-sulfate + adenosine 3',5'-bisphosphate + H(+). It carries out the reaction 3beta-hydroxyandrost-5-en-17-one + 3'-phosphoadenylyl sulfate = dehydroepiandrosterone 3-sulfate + adenosine 3',5'-bisphosphate + H(+). It catalyses the reaction 3beta-hydroxy-5-cholenate + 3'-phosphoadenylyl sulfate = 3beta-sulfo-5-cholenate + adenosine 3',5'-bisphosphate + H(+). The catalysed reaction is deoxycholate + 3'-phosphoadenylyl sulfate = 3alpha-sulfodeoxycholate + adenosine 3',5'-bisphosphate + H(+). The enzyme catalyses glycodeoxycholate + 3'-phosphoadenylyl sulfate = 3alpha-sulfoglycodeoxycholate + adenosine 3',5'-bisphosphate + H(+). It carries out the reaction taurodeoxycholate + 3'-phosphoadenylyl sulfate = 3alpha-sulfotaurodeoxycholate + adenosine 3',5'-bisphosphate + H(+). Its function is as follows. Sulfotransferase that utilizes 3'-phospho-5'-adenylyl sulfate (PAPS) as sulfonate donor to catalyze the sulfonation of the hydroxyl group of hydroxysteroids and bile acids. Prefered substrates are dehydroepiandrosterone (DHEA, also known as 3beta-hydroxyandrost-5-en-17-one) and 3beta-hydroxy-5-cholenoate, but can also catalyze deoxycholate and its conjugates, and lithocholate conjugates, in vitro. This is Sulfotransferase 2A6 from Rattus norvegicus (Rat).